A 502-amino-acid chain; its full sequence is Cytochrome P450 71B19 (502 aa).

The helical transmembrane segment at 1-21 (MAISFLCVFLITFVSLIFFAK) threads the bilayer. Residue C444 coordinates heme.

This sequence belongs to the cytochrome P450 family. Heme is required as a cofactor.

The protein resides in the membrane. The protein is Cytochrome P450 71B19 (CYP71B19) of Arabidopsis thaliana (Mouse-ear cress).